Consider the following 142-residue polypeptide: Large ribosomal subunit protein uL11 (142 aa).

It belongs to the universal ribosomal protein uL11 family. As to quaternary structure, part of the ribosomal stalk of the 50S ribosomal subunit. Interacts with L10 and the large rRNA to form the base of the stalk. L10 forms an elongated spine to which L12 dimers bind in a sequential fashion forming a multimeric L10(L12)X complex. Post-translationally, one or more lysine residues are methylated.

Functionally, forms part of the ribosomal stalk which helps the ribosome interact with GTP-bound translation factors. The chain is Large ribosomal subunit protein uL11 from Shigella boydii serotype 18 (strain CDC 3083-94 / BS512).